We begin with the raw amino-acid sequence, 220 residues long: Early protein OPG038 (220 aa).

The signal sequence occupies residues 1 to 17 (MVYKLVLLFCIASLGYS).

It belongs to the orthopoxvirus OPG038 family. Homooligomer. Interacts with host CD80 and CD86 when secreted. Post-translationally, glycosylated by host.

It is found in the host endoplasmic reticulum. The protein localises to the secreted. Plays a role in immune evasion. When secreted, inhibits T-cell activation by preventing the binding of host CD80 and CD86 to soluble CTLA4 and CD28. In the infected cell, may inhibits host NF kappa B activation. The chain is Early protein OPG038 (OPG038) from Variola virus (isolate Human/India/Ind3/1967) (VARV).